The chain runs to 111 residues: Antitoxin PrlF (111 aa).

The region spanning 12–59 is the SpoVT-AbrB domain; sequence TTESKVTIRGQTTIPAPVREALKLKPGQDSIHYEILPGGQVFMCRLGD.

As to quaternary structure, homodimer; forms a complex with YhaV with stoichiometry PrlF(2)-YhaV(4), possibly as a YhaV(2)-PrlF(2)-YhaV(2) complex like the MazFE complex. This complex is seen to dimerize in solution.

It localises to the cytoplasm. Functionally, antitoxin component of a type II toxin-antitoxin (TA) system. Labile antitoxin that binds to the YhaV toxin and neutralizes its ribonuclease activity. Also acts as a transcription factor. The YhaV/PrlF complex binds the prlF-yhaV operon, probably negatively regulating its expression. Negatively regulates its own expression as well as relieving the export block imposed by high-level synthesis of the LamB-LacZ hybrid protein. Overexpression leads to increased doubling time and also suppresses a htrA (degP) null phenotype. This is Antitoxin PrlF (prlF) from Escherichia coli (strain K12).